We begin with the raw amino-acid sequence, 688 residues long: Zinc finger CCCH domain-containing protein 22 (688 aa).

The segment at 62-123 is disordered; the sequence is ALLPPPPPPS…QPFSRSNGSV (62 aa). Residues 101–117 show a composition bias toward low complexity; it reads PLSASSPSSWAQAQPFS. A C3H1-type zinc finger spans residues 233 to 260; it reads GFGWKPCLYYARGFCKNGSSCRFVHGDD. In terms of domain architecture, RRM spans 366 to 442; it reads RQIYLTFPAD…RVLVKPYKEK (77 aa). Residues 487–522 adopt a coiled-coil conformation; the sequence is TNEMMLRRKLEEQQQAAELQQAIELHSRRLMDLQLL. Residues 552 to 624 form a disordered region; the sequence is LATTMVESPP…PTKSSVSAHQ (73 aa). The segment covering 574–589 has biased composition (basic and acidic residues); it reads TEERKMVNGGGDKEES. Polar residues predominate over residues 613–624; the sequence is ASPTKSSVSAHQ.

The sequence is that of Zinc finger CCCH domain-containing protein 22 from Oryza sativa subsp. japonica (Rice).